The following is a 341-amino-acid chain: S-adenosylmethionine:tRNA ribosyltransferase-isomerase (341 aa).

Belongs to the QueA family. As to quaternary structure, monomer.

The protein localises to the cytoplasm. It catalyses the reaction 7-aminomethyl-7-carbaguanosine(34) in tRNA + S-adenosyl-L-methionine = epoxyqueuosine(34) in tRNA + adenine + L-methionine + 2 H(+). It functions in the pathway tRNA modification; tRNA-queuosine biosynthesis. In terms of biological role, transfers and isomerizes the ribose moiety from AdoMet to the 7-aminomethyl group of 7-deazaguanine (preQ1-tRNA) to give epoxyqueuosine (oQ-tRNA). The protein is S-adenosylmethionine:tRNA ribosyltransferase-isomerase of Acetivibrio thermocellus (strain ATCC 27405 / DSM 1237 / JCM 9322 / NBRC 103400 / NCIMB 10682 / NRRL B-4536 / VPI 7372) (Clostridium thermocellum).